We begin with the raw amino-acid sequence, 336 residues long: NAC domain-containing protein 100 (336 aa).

The NAC domain occupies 16–166 (LPPGFRFHPT…EWVICRVFQK (151 aa)). A DNA-binding region spans residues 113-172 (VGMKKTLVFYRGRAPKGQKTNWVMHEYRLEGKFSAHNLPKTAKNEWVICRVFQKSAGGKK). The tract at residues 313 to 336 (RRFDSQEDPSSSTGPVDLEPFWNY) is disordered.

Its subcellular location is the nucleus. In terms of biological role, binds to the promoter regions of genes involved in chlorophyll catabolic processes, such as NYC1, SGR1, SGR2 and PAO. The polypeptide is NAC domain-containing protein 100 (Arabidopsis thaliana (Mouse-ear cress)).